A 548-amino-acid chain; its full sequence is Chaperonin GroEL 1 (548 aa).

Residues 30 to 33, Lys-51, 87 to 91, Gly-415, 479 to 481, and Asp-495 each bind ATP; these read TLGP, DGTTT, and NAA.

This sequence belongs to the chaperonin (HSP60) family. As to quaternary structure, forms a cylinder of 14 subunits composed of two heptameric rings stacked back-to-back. Interacts with the co-chaperonin GroES.

The protein localises to the cytoplasm. The enzyme catalyses ATP + H2O + a folded polypeptide = ADP + phosphate + an unfolded polypeptide.. Together with its co-chaperonin GroES, plays an essential role in assisting protein folding. The GroEL-GroES system forms a nano-cage that allows encapsulation of the non-native substrate proteins and provides a physical environment optimized to promote and accelerate protein folding. In Anaeromyxobacter dehalogenans (strain 2CP-C), this protein is Chaperonin GroEL 1.